We begin with the raw amino-acid sequence, 153 residues long: UPF0756 membrane protein NT01CX_1209 (153 aa).

Helical transmembrane passes span 5-25 (IILL…LGIA), 45-65 (ENHF…IPII), 83-103 (IVCF…VGFL), and 113-133 (IILG…GPLI).

Belongs to the UPF0756 family.

Its subcellular location is the cell membrane. In Clostridium novyi (strain NT), this protein is UPF0756 membrane protein NT01CX_1209.